A 494-amino-acid polypeptide reads, in one-letter code: MSYMVARMQKMKAGNLGGAFKHNERVFETHSNKDINPSRSHLNYELTDRDRSVSYEKQIKDYVNENKVSNRAIRKDAVLCDEWIITSDKDFFEKLDEEQTRTFFETAKNYFAENYGESNIAYASVHLDESTPHMHMGVVPFENGKLSSKAMFDREELKHIQEDLPRYMSDHGFELERGKLNSEAKHKTVAEFKRAMADMELKEELLEKYHAPPFVDERTGELNNDTEAFWHEKEFADMFEVQSPIRETTNQEKMDWLRKQYQEELKKLESSKKPLEDDLSHLEELLDKKTKEYIKIDSEASERASELSKAEGYINTLENHSKSLEAKIECLESDNLQLEKQKATKLEAKALNESELRELKPKKNFLGKEHYELSPEQFEGLKAEVYRSRTLLHHKDIELEQAKRQVSLRASKNYFTASLERAKEKAKGESIDRLKSEIKRLKNENSILRQQNDKMLGKLRELMPDKAFKNLLSELKAIKPIVNIIKKAIEKSLF.

DNA contacts are provided by Y44 and Y115.

Belongs to the plasmid mobilization pre family.

Functionally, the interaction of the RSA site and the PRE protein may not only serves a function in plasmid maintenance, but may also contributes to the distribution of small antibiotic resistance plasmids among Gram-positive bacteria. The protein is Plasmid recombination enzyme (pre) of Streptococcus agalactiae.